The following is a 138-amino-acid chain: MRALWIVAVLLVGVEGSLLQFNKMIKFETRKNAVPFYAFYGCYCGWGGQGRPKDATDRCCFVHDCCYGKLAKCNTKWDIYRYSLKSGYITCGKGTWCKEQICECDRVAAECLRRSLSTYKNEYMFYPDSRCREPSETC.

The signal sequence occupies residues 1-16 (MRALWIVAVLLVGVEG). Intrachain disulfides connect Cys-42/Cys-131, Cys-44/Cys-60, Cys-59/Cys-111, Cys-65/Cys-138, Cys-66/Cys-104, Cys-73/Cys-97, and Cys-91/Cys-102. Tyr-43, Gly-45, and Gly-47 together coordinate Ca(2+). His-63 is a catalytic residue. Position 64 (Asp-64) interacts with Ca(2+). Residue Asp-105 is part of the active site.

Belongs to the phospholipase A2 family. Group II subfamily. D49 sub-subfamily. In terms of assembly, heterodimer of one of the acidic (CA1, CA2, CA3 or CA4) and one of the basic (CBa1, CBa2, CBb, CBc or CBd) subunits; non-covalently linked. The acidic subunit is non-toxic, without enzymatic activity and comprises 3 peptides that are cross-linked by 5 disulfide bridges. The basic subunit is toxic, has phospholipase A2 activity and is composed of a single chain. Multiple variants of each subunit give different crotoxin complexes that can be subdivided into 2 classes: (1) those of high toxicity, low PLA2 activity (CBb, CBc and CBd linked with high affinity to any CA) and high stability (K(d)=4.5 nM) and (2) those of moderate toxicity, high PLA2 activity (CBa2 linked with low affinity to any CA) and low stability (K(d)=25 nM). Interacts with human NBD1 domain of CFTR. Ca(2+) is required as a cofactor. Expressed by the venom gland.

It is found in the secreted. The enzyme catalyses a 1,2-diacyl-sn-glycero-3-phosphocholine + H2O = a 1-acyl-sn-glycero-3-phosphocholine + a fatty acid + H(+). Functionally, heterodimer CA-CB: Crotoxin is a potent presynaptic neurotoxin that possesses phospholipase A2 (PLA2) activity and exerts a lethal action by blocking neuromuscular transmission. It consists of a non-covalent association of a basic and weakly toxic PLA2 subunit (CBa2, CBb, CBc, or CBd), with a small acidic, non-enzymatic and non-toxic subunit (CA1, CA2, CA3 or CA4). The complex acts by binding to a specific 48-kDa protein (R48) receptor located on presynaptic membranes, forming a transient ternary complex CA-CB-R48, followed by dissociation of the CA-CB complex and release of the CA subunit. At equilibrium, only the CB subunits remain associated with the specific crotoxin receptor. In addition to neurotoxicity, crotoxin has been found to exert myotoxicity, nephrotoxicity, and cardiovascular toxicity. Moreover, anti-inflammatory, immunomodulatory, anti-tumor and analgesic effects of crotoxin have also been reported. In terms of biological role, monomer CBa2: The basic subunit of crotoxin is a snake venom phospholipase A2 (PLA2) that exhibits weak neurotoxicity (10-fold less than the heterodimer) and strong anticoagulant effects by binding to factor Xa (F10) and inhibiting the prothrombinase activity (IC(50) is 41 nM). In addition, it shows the same effects described for the heterodimer and binds the nucleotide-binding domain (NBD1) of CFTR chloride channels and increases the channel current. PLA2 catalyzes the calcium-dependent hydrolysis of the 2-acyl groups in 3-sn-phosphoglycerides. The sequence is that of Phospholipase A2 crotoxin basic chain CBa2 from Crotalus durissus terrificus (South American rattlesnake).